The sequence spans 228 residues: PKHD-type hydroxylase Reut_A2877 (228 aa).

Residues 80–180 (IVYPPMFNRY…RVASFFWIQS (101 aa)) form the Fe2OG dioxygenase domain. 3 residues coordinate Fe cation: histidine 98, aspartate 100, and histidine 161. Residue arginine 171 coordinates 2-oxoglutarate.

The cofactor is Fe(2+). L-ascorbate is required as a cofactor.

The chain is PKHD-type hydroxylase Reut_A2877 from Cupriavidus pinatubonensis (strain JMP 134 / LMG 1197) (Cupriavidus necator (strain JMP 134)).